The chain runs to 112 residues: ATP synthase epsilon chain (112 aa).

This sequence belongs to the ATPase epsilon chain family. As to quaternary structure, F-type ATPases have 2 components, CF(1) - the catalytic core - and CF(0) - the membrane proton channel. CF(1) has five subunits: alpha(3), beta(3), gamma(1), delta(1), epsilon(1). CF(0) has three main subunits: a, b and c.

It is found in the cell inner membrane. Its function is as follows. Produces ATP from ADP in the presence of a proton gradient across the membrane. This is ATP synthase epsilon chain (atpC) from Rickettsia prowazekii (strain Madrid E).